The chain runs to 510 residues: Lysine--tRNA ligase (510 aa).

Mg(2+) contacts are provided by Glu-420 and Glu-427.

The protein belongs to the class-II aminoacyl-tRNA synthetase family. In terms of assembly, homodimer. Mg(2+) is required as a cofactor.

It localises to the cytoplasm. The catalysed reaction is tRNA(Lys) + L-lysine + ATP = L-lysyl-tRNA(Lys) + AMP + diphosphate. The sequence is that of Lysine--tRNA ligase from Clostridium novyi (strain NT).